A 241-amino-acid polypeptide reads, in one-letter code: 1-(5-phosphoribosyl)-5-[(5-phosphoribosylamino)methylideneamino] imidazole-4-carboxamide isomerase (241 aa).

The active-site Proton acceptor is the aspartate 8. The Proton donor role is filled by aspartate 130.

It belongs to the HisA/HisF family.

It localises to the cytoplasm. It carries out the reaction 1-(5-phospho-beta-D-ribosyl)-5-[(5-phospho-beta-D-ribosylamino)methylideneamino]imidazole-4-carboxamide = 5-[(5-phospho-1-deoxy-D-ribulos-1-ylimino)methylamino]-1-(5-phospho-beta-D-ribosyl)imidazole-4-carboxamide. Its pathway is amino-acid biosynthesis; L-histidine biosynthesis; L-histidine from 5-phospho-alpha-D-ribose 1-diphosphate: step 4/9. This Francisella philomiragia subsp. philomiragia (strain ATCC 25017 / CCUG 19701 / FSC 153 / O#319-036) protein is 1-(5-phosphoribosyl)-5-[(5-phosphoribosylamino)methylideneamino] imidazole-4-carboxamide isomerase.